The following is a 2061-amino-acid chain: Myoferlin (2061 aa).

Residues 1-101 enclose the C2 1 domain; sequence MLRVIVESAS…TGDQSRSLPY (101 aa). Topologically, residues 1-2025 are cytoplasmic; that stretch reads MLRVIVESAS…MKFIVWRRFK (2025 aa). Positions 123-172 are disordered; that stretch reads GYDPPSAPHPNDLSGPSVPGMGGDGEEDEGDEDRLDNAVRGPGPKGPVGT. The span at 146–156 shows a compositional bias: acidic residues; the sequence is DGEEDEGDEDR. The residue at position 174 (S174) is a Phosphoserine. C2 domains follow at residues 181–300 and 339–474; these read RLTK…RKWL and DSDD…VEDF. Residues 186–281 form a necessary for interaction with EHD2 region; the sequence is KNSRRMLSNK…RADCLMGEFK (96 aa). A disordered region spans residues 323 to 342; it reads LGTGDEPPPERRDRDNDSDD. Ca(2+) contacts are provided by D390, D396, D444, D446, and D452. At K553 the chain carries N6-acetyllysine. S729 carries the post-translational modification Phosphoserine. K884 carries the N6-acetyllysine modification. Residues 938-967 are disordered; it reads ESRYPGGDWKPAEDTYTDANGDKAASPSEL. C2 domains are found at residues 1123 to 1251 and 1282 to 1410; these read GANT…LLWH and LPPQ…GKED. The Ca(2+) site is built by D1155, D1161, D1217, and D1219. Residue K1507 is modified to N6-acetyllysine. C2 domains are found at residues 1536-1654 and 1772-1920; these read PAPP…SHCG and GPPG…EKCR. Residues D1569, D1575, D1624, D1626, D1891, S1894, and D1897 each coordinate Ca(2+). S1915 is subject to Phosphoserine. The chain crosses the membrane as a helical span at residues 2026-2046; that stretch reads WVIIGLLFLLILLLFVAVLLY. Residues 2047–2061 lie on the Extracellular side of the membrane; the sequence is SLPNYLSMKIVKPNV.

It belongs to the ferlin family. In terms of assembly, interacts with DNM2 and KDR. Interacts with EHD1. Interacts with EHD2; the interaction is direct. Interacts with RIPOR2. Ca(2+) is required as a cofactor. In terms of tissue distribution, expressed in myoblast and endothelial cells (at protein level). Highly expressed in cardiac and skeletal muscles. Also present in lung, and at very low levels in kidney, placenta and brain.

It localises to the cell membrane. The protein resides in the nucleus membrane. The protein localises to the cytoplasmic vesicle membrane. Its function is as follows. Calcium/phospholipid-binding protein that plays a role in the plasmalemma repair mechanism of endothelial cells that permits rapid resealing of membranes disrupted by mechanical stress. Involved in endocytic recycling. Implicated in VEGF signal transduction by regulating the levels of the receptor KDR. The polypeptide is Myoferlin (MYOF) (Homo sapiens (Human)).